We begin with the raw amino-acid sequence, 346 residues long: WD repeat-containing protein LWD1 (346 aa).

M1 bears the N-acetylmethionine mark. WD repeat units follow at residues 79–121 (EHPY…SRVE), 133–173 (EFCG…VDTQ), 176–214 (AHDKEVFDIAWGGVGVFASVSADGSVRVFDLRDKEHSTI), and 265–305 (RHQA…QHVE).

It localises to the nucleus. Functionally, clock protein essential for the proper expression phase and period length of both the oscillator and output genes known to participate in photoperiod sensing. Required for the expression of APRR9, APRR7, and APRR5. Regulated by APRR9 and APRR7 at the transcriptional level, indicating the existence of a positive feedback loop within the circadian clock. May function to delay the expression of the morning genes until dawn approaches. In Arabidopsis thaliana (Mouse-ear cress), this protein is WD repeat-containing protein LWD1 (LWD1).